The following is a 265-amino-acid chain: Type 1 encapsulin shell protein (265 aa).

It belongs to the encapsulin family. Family 1 subfamily. Found in a complex with DyP, suggesting it is the native cargo protein. Monomers form pentamers, which assemble to form hollow shells composed of 60 subunits with several openings.

Its subcellular location is the encapsulin nanocompartment. It localises to the cell membrane. In terms of biological role, shell component of a type 1 encapsulin nanocompartment. Assembles into proteinaceous shells 23-24 nm in diameter with 2-2.5 nm thick walls. Cargo protein DyP is targeted to the interior via its C-terminal extension; probably only 1 DyP hexamer is incorporated into each shell. Probably involved in protection against oxidative damage. This Mycolicibacterium paratuberculosis (strain ATCC BAA-968 / K-10) (Mycobacterium paratuberculosis) protein is Type 1 encapsulin shell protein.